The following is a 360-amino-acid chain: Amine dehydrogenase (360 aa).

The protein belongs to the amine dehydrogenase family. In terms of assembly, homodimer.

It carries out the reaction a secondary alkyl amine + NAD(+) + H2O = a ketone + NH4(+) + NADH + H(+). The enzyme catalyses a secondary alkyl amine + NADP(+) + H2O = a ketone + NH4(+) + NADPH + H(+). The catalysed reaction is serinol + NAD(+) + H2O = dihydroxyacetone + NH4(+) + NADH + H(+). It catalyses the reaction serinol + NADP(+) + H2O = dihydroxyacetone + NH4(+) + NADPH + H(+). It carries out the reaction 2-aminopropan-1-ol + NAD(+) + H2O = hydroxyacetone + NH4(+) + NADH + H(+). The enzyme catalyses (R)-1-phenylethylamine + NAD(+) + H2O = acetophenone + NH4(+) + NADH + H(+). The catalysed reaction is (S)-1-phenylethylamine + NAD(+) + H2O = acetophenone + NH4(+) + NADH + H(+). It catalyses the reaction (2S)-2-aminobutan-1-ol + NAD(+) + H2O = 1-hydroxy-2-butanone + NH4(+) + NADH + H(+). It carries out the reaction (2S)-2-amino-3-methylbutan-1-ol + NAD(+) + H2O = 1-hydroxy-3-methylbutan-2-one + NH4(+) + NADH + H(+). The enzyme catalyses 2-aminopentan-1-ol + NAD(+) + H2O = 1-hydroxypentan-2-one + NH4(+) + NADH + H(+). The catalysed reaction is (S)-leucinol + NAD(+) + H2O = 1-hydroxy-4-methylpentan-2-one + NH4(+) + NADH + H(+). It catalyses the reaction (S)-isoleucinol + NAD(+) + H2O = (3S)-1-hydroxy-3-methylpentan-2-one + NH4(+) + NADH + H(+). It carries out the reaction (S)-methioninol + NAD(+) + H2O = 1-hydroxy-4-(methythio)butan-2-one + NH4(+) + NADH + H(+). The enzyme catalyses 2-aminocyclohexanol + NAD(+) + H2O = 2-hydroxycyclohexan-1-one + NH4(+) + NADH + H(+). The catalysed reaction is L-alanine + NAD(+) + H2O = pyruvate + NH4(+) + NADH + H(+). It catalyses the reaction D-alanine + NAD(+) + H2O = pyruvate + NH4(+) + NADH + H(+). It carries out the reaction L-aspartate + NAD(+) + H2O = oxaloacetate + NH4(+) + NADH + H(+). The enzyme catalyses D-aspartate + NAD(+) + H2O = oxaloacetate + NH4(+) + NADH + H(+). The catalysed reaction is L-glutamate + NAD(+) + H2O = 2-oxoglutarate + NH4(+) + NADH + H(+). It catalyses the reaction D-glutamate + NAD(+) + H2O = 2-oxoglutarate + NH4(+) + NADH + H(+). It carries out the reaction L-serine + NAD(+) + H2O = 3-hydroxypyruvate + NH4(+) + NADH + H(+). The enzyme catalyses D-serine + NAD(+) + H2O = 3-hydroxypyruvate + NH4(+) + NADH + H(+). The catalysed reaction is methylamine + NAD(+) + H2O = formaldehyde + NH4(+) + NADH + H(+). It catalyses the reaction ethylamine + NAD(+) + H2O = acetaldehyde + NH4(+) + NADH + H(+). It carries out the reaction propylamine + NAD(+) + H2O = propanal + NH4(+) + NADH + H(+). The enzyme catalyses butylamine + NAD(+) + H2O = butanal + NH4(+) + NADH + H(+). The catalysed reaction is hexylamine + NAD(+) + H2O = hexanal + NH4(+) + NADH + H(+). It catalyses the reaction octylamine + NAD(+) + H2O = octanal + NH4(+) + NADH + H(+). It carries out the reaction (R)-sec-butylamine + NAD(+) + H2O = butan-2-one + NH4(+) + NADH + H(+). The enzyme catalyses (S)-sec-butylamine + NAD(+) + H2O = butan-2-one + NH4(+) + NADH + H(+). The catalysed reaction is 2-aminopentane + NAD(+) + H2O = pentan-2-one + NH4(+) + NADH + H(+). It catalyses the reaction 3-aminopentane + NAD(+) + H2O = pentan-3-one + NH4(+) + NADH + H(+). It carries out the reaction (2R)-heptan-2-amine + NAD(+) + H2O = heptan-2-one + NH4(+) + NADH + H(+). The enzyme catalyses (2S)-heptan-2-amine + NAD(+) + H2O = heptan-2-one + NH4(+) + NADH + H(+). The catalysed reaction is benzylamine + NAD(+) + H2O = benzaldehyde + NH4(+) + NADH + H(+). It catalyses the reaction 3-aminobutan-2-ol + NAD(+) + H2O = acetoin + NH4(+) + NADH + H(+). It carries out the reaction 3-aminobutan-1-ol + NAD(+) + H2O = 4-hydroxybutan-2-one + NH4(+) + NADH + H(+). The enzyme catalyses 5-hydroxypentan-2-amine + NAD(+) + H2O = 5-hydroxypentan-2-one + NH4(+) + NADH + H(+). The catalysed reaction is 4-hydroxyhexan-3-amine + NAD(+) + H2O = 4-hydroxyhexan-3-one + NH4(+) + NADH + H(+). It catalyses the reaction 5-hydroxyoctan-4-amine + NAD(+) + H2O = 5-hydroxyoctan-4-one + NH4(+) + NADH + H(+). It carries out the reaction 2-hydroxy-1-phenylethan-1-amine + NAD(+) + H2O = 2-hydroxyacetophenone + NH4(+) + NADH + H(+). The enzyme catalyses hexan-2-amine + NAD(+) + H2O = hexan-2-one + NH4(+) + NADH + H(+). The catalysed reaction is 4-phenylbutan-2-amine + NAD(+) + H2O = 4-phenylbutan-2-one + NH4(+) + NADH + H(+). Its function is as follows. Catalyzes the reversible oxidative deaminations of a broad range of amines, amino alcohols and amino acids. Catalyzes the reversible dehydrogenation of serinol in the presence of NAD(+) to give dihydroxyacetone, ammonium ion and NADH, while NADP(+) shows a slight activity. Is also able to produce 2-amino-1-propanol and aspartate by the reductive amination of the corresponding keto alcohol (hydroxyacetone) and keto acid (oxaloacetate) in the presence of ammonium ions and NADH, and that of acetophenone from phenylethylamine by the oxidative deamination in the presence of NAD(+). This chain is Amine dehydrogenase, found in Streptomyces virginiae (Streptomyces cinnamonensis).